Here is a 423-residue protein sequence, read N- to C-terminus: Serine hydroxymethyltransferase (423 aa).

(6S)-5,6,7,8-tetrahydrofolate is bound by residues Leu118 and 122-124 (GHL). Position 227 is an N6-(pyridoxal phosphate)lysine (Lys227). 351 to 353 (SPF) serves as a coordination point for (6S)-5,6,7,8-tetrahydrofolate.

It belongs to the SHMT family. In terms of assembly, homodimer. Pyridoxal 5'-phosphate is required as a cofactor.

The protein localises to the cytoplasm. It catalyses the reaction (6R)-5,10-methylene-5,6,7,8-tetrahydrofolate + glycine + H2O = (6S)-5,6,7,8-tetrahydrofolate + L-serine. Its pathway is one-carbon metabolism; tetrahydrofolate interconversion. It functions in the pathway amino-acid biosynthesis; glycine biosynthesis; glycine from L-serine: step 1/1. Functionally, catalyzes the reversible interconversion of serine and glycine with tetrahydrofolate (THF) serving as the one-carbon carrier. This reaction serves as the major source of one-carbon groups required for the biosynthesis of purines, thymidylate, methionine, and other important biomolecules. Also exhibits THF-independent aldolase activity toward beta-hydroxyamino acids, producing glycine and aldehydes, via a retro-aldol mechanism. This chain is Serine hydroxymethyltransferase, found in Petrotoga mobilis (strain DSM 10674 / SJ95).